A 105-amino-acid polypeptide reads, in one-letter code: Small ribosomal subunit protein uS10 (105 aa).

It belongs to the universal ribosomal protein uS10 family. In terms of assembly, part of the 30S ribosomal subunit.

Involved in the binding of tRNA to the ribosomes. In Desulfotalea psychrophila (strain LSv54 / DSM 12343), this protein is Small ribosomal subunit protein uS10.